The sequence spans 1598 residues: Fatty acid synthase subunit alpha (1598 aa).

The interval R96 to V134 is disordered. The span at A104–K115 shows a compositional bias: low complexity. A Carrier domain is found at D143–T221. S181 is subject to O-(pantetheine 4'-phosphoryl)serine. Residues L543–A784 are ketoreductase (KR) domain. Residues K818 to P844 form a disordered region. Residues D820–H829 show a composition bias toward polar residues. In terms of domain architecture, Ketosynthase family 3 (KS3) spans H992–H1524. The active-site For beta-ketoacyl synthase activity is C1175. The disordered stretch occupies residues A1280–E1301. Catalysis depends on for beta-ketoacyl synthase activity residues H1409 and H1450.

It belongs to the thiolase-like superfamily. Fungal fatty acid synthetase subunit alpha family. In terms of assembly, fatty acid synthase is composed of alpha and beta subunits.

It carries out the reaction acetyl-CoA + n malonyl-CoA + 2n NADPH + 4n H(+) = a long-chain-acyl-CoA + n CoA + n CO2 + 2n NADP(+).. It catalyses the reaction a fatty acyl-[ACP] + malonyl-[ACP] + H(+) = a 3-oxoacyl-[ACP] + holo-[ACP] + CO2. The catalysed reaction is a (3R)-hydroxyacyl-[ACP] + NADP(+) = a 3-oxoacyl-[ACP] + NADPH + H(+). It functions in the pathway mycotoxin biosynthesis. Fatty acid synthase subunit alpha; part of the gene cluster that mediates the biosynthesis of gramillins A and B, bicyclic lipopeptides that induce cell death in maize leaves but not in wheat leaves. The nonribosomal peptide synthetase GRA1 incorporates respectively a glutamic adic (Glu), a leucine (Leu), a serine (Ser), a hydroxyglutamine (HOGln), a 2-amino decanoic acid, and 2 cysteins (CysB and CysA). The biosynthesis of 2-amino decanoic acid incorporated in gramillins could be initiated by a fatty acid synthase composed of the alpha and beta subunits FGSG_00036 and FGSG_11656. The cytochrome P450 monooxygenase FGSG_15680 could hydroxylate the fatty acid chain. Subsequent oxidation to the ketone by the oxidoreductase FGSG_00048 and transamination by aminotransferase FGSG_00049 could form 2-amino-decanoic acid. On the other hand, FGSG_15680 could also be responsible for the HO-modified glutamine at the gamma-position. Whether hydroxylation occurs on the fully assembled product or on the Gln residue prior to assembly into the gramillins requires further proof. The thioredoxin FGSG_00043 could also be required for the disulfide-bond formation between CysA and CysB. The specific involvement of the remaining proteins from the cluster is more difficult to discern, but could have broader regulatory (FGSG_00040 and FGSG_11657) or enzymatic functions (FGSG_00044 and FGSG_00045). The final C-domain of GRA1 does not possess the expected sequence of a termination CT domain, often implicated in macrocyclization and release of a cyclopeptidein fungal NRPs; and the thioesterase FGSG_00047 may act in concert with the terminal C-domain of GRA1 to catalyze the formation of the macrocyclic anhydride and release of the products. The chain is Fatty acid synthase subunit alpha from Gibberella zeae (strain ATCC MYA-4620 / CBS 123657 / FGSC 9075 / NRRL 31084 / PH-1) (Wheat head blight fungus).